The following is a 398-amino-acid chain: MMGTILNPYFGEFGGMYVPEILVPVLKQLEKAFVEAQHDPVFQQEFQDLLKNYAGRPTALTLCRNLTKGTKTKLYLKREDLLHGGAHKTNQVLGQILLAKRMGKTRIIAETGAGQHGVATALACAMLDMPCRVYMGAKDVERQSPNVFRMRLMGAEVIPVEKGSCSLKDACCEAMRDWSANYETTHYLLGTAAGPHPFPTIVREFQKMIGEETKCQILAKENRLPDAVIAAVGGGSNAIGMFAEFIAEKSVQLIGIEPAGNGIHTGKHGAPLRHGSIGIYFGMKSPIMQTQDGQIEESYSISAGLDFPSVGPEHAYLHTIGRAQYESITDDEAIEAFQALAKHEGIIPALESSHALAYALKLIVQNPEKEQLLVVNLSGRGDKDIFTVDKILTEKGII.

K88 bears the N6-(pyridoxal phosphate)lysine mark.

The protein belongs to the TrpB family. Tetramer of two alpha and two beta chains. Pyridoxal 5'-phosphate serves as cofactor.

It carries out the reaction (1S,2R)-1-C-(indol-3-yl)glycerol 3-phosphate + L-serine = D-glyceraldehyde 3-phosphate + L-tryptophan + H2O. It functions in the pathway amino-acid biosynthesis; L-tryptophan biosynthesis; L-tryptophan from chorismate: step 5/5. In terms of biological role, the beta subunit is responsible for the synthesis of L-tryptophan from indole and L-serine. This chain is Tryptophan synthase beta chain, found in Histophilus somni (strain 2336) (Haemophilus somnus).